Consider the following 105-residue polypeptide: Small ribosomal subunit protein uS10 (105 aa).

It belongs to the universal ribosomal protein uS10 family. In terms of assembly, part of the 30S ribosomal subunit.

Involved in the binding of tRNA to the ribosomes. This chain is Small ribosomal subunit protein uS10, found in Trichormus variabilis (strain ATCC 29413 / PCC 7937) (Anabaena variabilis).